Reading from the N-terminus, the 520-residue chain is 2-isopropylmalate synthase (520 aa).

Positions I12–V274 constitute a Pyruvate carboxyltransferase domain. The Mn(2+) site is built by D21, H209, H211, and N245. The interval R396–A520 is regulatory domain.

This sequence belongs to the alpha-IPM synthase/homocitrate synthase family. LeuA type 1 subfamily. Homodimer. The cofactor is Mn(2+).

The protein resides in the cytoplasm. The catalysed reaction is 3-methyl-2-oxobutanoate + acetyl-CoA + H2O = (2S)-2-isopropylmalate + CoA + H(+). It functions in the pathway amino-acid biosynthesis; L-leucine biosynthesis; L-leucine from 3-methyl-2-oxobutanoate: step 1/4. In terms of biological role, catalyzes the condensation of the acetyl group of acetyl-CoA with 3-methyl-2-oxobutanoate (2-ketoisovalerate) to form 3-carboxy-3-hydroxy-4-methylpentanoate (2-isopropylmalate). The protein is 2-isopropylmalate synthase of Xanthomonas oryzae pv. oryzae (strain KACC10331 / KXO85).